Consider the following 542-residue polypeptide: Chaperonin GroEL 3 (542 aa).

Residues 30 to 33 (TLGP), Lys-51, 87 to 91 (DGTTT), Gly-415, and Asp-494 contribute to the ATP site. The segment at 523–542 (KPKKKEPPMPAMPSDMGDYD) is disordered.

This sequence belongs to the chaperonin (HSP60) family. As to quaternary structure, forms a cylinder of 14 subunits composed of two heptameric rings stacked back-to-back. Interacts with the co-chaperonin GroES.

The protein resides in the cytoplasm. The enzyme catalyses ATP + H2O + a folded polypeptide = ADP + phosphate + an unfolded polypeptide.. In terms of biological role, together with its co-chaperonin GroES, plays an essential role in assisting protein folding. The GroEL-GroES system forms a nano-cage that allows encapsulation of the non-native substrate proteins and provides a physical environment optimized to promote and accelerate protein folding. This is Chaperonin GroEL 3 from Syntrophus aciditrophicus (strain SB).